Here is a 396-residue protein sequence, read N- to C-terminus: MQNMVILGATGSIGASTLSVVACNPEQYKVYALVANTNVAKMLEICIAHQPKIAHMVDAQAAQSLKQQLPSHLDIEVTTGEDELLSLVSSSDVDTVMAAIVGAAGLPSTLAAVNAGKRVLLANKESLVMSGQLFIEAMQKSGAQVLPVDSEHNAIFQCLSERSQLEIGRCDLAGAGVSHILLTGSGGPFLTSDLATLSAMTPEQACKHPNWSMGRKISVDSATMMNKGLEYIEARWLFNASSEQLKVVIHPQSVIHSMVQYRDGSVLAQLGNPDMRTPIAHCMAFPQRINSGVEPLDFFKVGQLSFLEPDFTRFPCLALAIEACKQGQEATTVLNAANEISVQAFLDGKIRFTDIARINEQSLMNTATHPLNSIDDILALDFQSRQSTLDAITKLN.

NADPH is bound by residues Thr-10, Gly-11, Ser-12, Ile-13, Asn-38, and Asn-123. 1-deoxy-D-xylulose 5-phosphate is bound at residue Lys-124. An NADPH-binding site is contributed by Glu-125. Residue Asp-149 participates in Mn(2+) binding. The 1-deoxy-D-xylulose 5-phosphate site is built by Ser-150, Glu-151, Ser-185, and His-208. Glu-151 is a Mn(2+) binding site. Gly-214 contacts NADPH. 1-deoxy-D-xylulose 5-phosphate is bound by residues Ser-221, Asn-226, Lys-227, and Glu-230. Mn(2+) is bound at residue Glu-230.

Belongs to the DXR family. Mg(2+) serves as cofactor. Requires Mn(2+) as cofactor.

The enzyme catalyses 2-C-methyl-D-erythritol 4-phosphate + NADP(+) = 1-deoxy-D-xylulose 5-phosphate + NADPH + H(+). The protein operates within isoprenoid biosynthesis; isopentenyl diphosphate biosynthesis via DXP pathway; isopentenyl diphosphate from 1-deoxy-D-xylulose 5-phosphate: step 1/6. Functionally, catalyzes the NADPH-dependent rearrangement and reduction of 1-deoxy-D-xylulose-5-phosphate (DXP) to 2-C-methyl-D-erythritol 4-phosphate (MEP). The sequence is that of 1-deoxy-D-xylulose 5-phosphate reductoisomerase from Shewanella halifaxensis (strain HAW-EB4).